Consider the following 97-residue polypeptide: Large ribosomal subunit protein bL27 (97 aa).

The tract at residues 1-23 (MAHKKGASSSRNGRDSTSKRLGV) is disordered.

It belongs to the bacterial ribosomal protein bL27 family.

The sequence is that of Large ribosomal subunit protein bL27 from Acidothermus cellulolyticus (strain ATCC 43068 / DSM 8971 / 11B).